The sequence spans 103 residues: MQNQQIRIRLKAFDHRLIDQSTQEIVETAKRTGAQVRGPIPLPTRKERFTVLVSPHVNKDARDQYEIRTHKRVLDIVQPTDKTVDALMKLDLAAGVEVQISLG.

It belongs to the universal ribosomal protein uS10 family. Part of the 30S ribosomal subunit.

Involved in the binding of tRNA to the ribosomes. The protein is Small ribosomal subunit protein uS10 of Stutzerimonas stutzeri (strain A1501) (Pseudomonas stutzeri).